The sequence spans 472 residues: MPQTPPFSAMFDSSGYNRNLYQSAEDSCGGLYYHDNNLLSGSLEALIQHLVPNVDYYPDRTYIFTFLLSSRLFMHPYELMAKVCHLCVEHQRLSDPNSDKNQIRKIAPKILQLLTEWTETFPYDFRDERMMRNLKDLAHRIASGEETYRKNVQQMIQCLIRKLAALSQYEEVLAKISSTSTDRLTVLKTKPQSIQRDIITVCSDPYTLAQQLTHIELERLNYIGPEEFVQAFVQKDPLDNDKSCYSERKKTRNLEAYVEWFNRLSYLVATEICMPVKKKHRARMIEYFIDVARECFNIGNFNSLMAIISGMNMSPVSRLKKTWAKVKTAKFDVLEHQMDPSSNFYNYRTALRGAAQRSLTAHSSREKIVIPFFSLLIKDIYFLNEGCANRLPNGHVNFEKFWELAKQVSEFMTWKQVECPFERDRKILQHLLTVPVFSEDALYLASYESEGPENHIEKDRWKSLRSSLLGRV.

The N-terminal Ras-GEF domain maps to 34-164 (HDNNLLSGSL…MIQCLIRKLA (131 aa)). The 249-residue stretch at 204 to 452 (DPYTLAQQLT…YLASYESEGP (249 aa)) folds into the Ras-GEF domain.

As to quaternary structure, interacts with CCDC124 during cytokinesis. Interacts with Ras family proteins.

Its subcellular location is the early endosome. It is found in the late endosome. The protein resides in the midbody. Its function is as follows. Guanine nucleotide exchange factor (GEF) with specificity for RAP2A, it doesn't seems to activate other Ras family proteins (in vitro). This is Ras-GEF domain-containing family member 1B (RASGEF1B) from Bos taurus (Bovine).